The sequence spans 254 residues: MAAPLRHTLLKLVPTLLRSSYVAQVPLQTLCTRGPPEEDAPSSLPVSPYESEPWKYLDSEEYHNRYGSRPVWADYRRNHKGGVPPQRTRKTCIRNNKVAGNPCPICRDHKLHVDFRNVKLLEQFVCAHTGIIFHAPYTGVCMKQHKKLTQAIQKARECGLLSYYVPQVEPRDADFGTVHGAVSVTPPAPTLLSGEPWYPWYSWQQPPERELSRLRRLYQGNLLEESGPPPESMPEMPTTPPAESSIEQPGSQSA.

The N-terminal 33 residues, 1-33 (MAAPLRHTLLKLVPTLLRSSYVAQVPLQTLCTR), are a transit peptide targeting the mitochondrion. S47 bears the Phosphoserine mark. Residues 218-254 (YQGNLLEESGPPPESMPEMPTTPPAESSIEQPGSQSA) form a disordered region. The segment covering 227-240 (GPPPESMPEMPTTP) has biased composition (pro residues).

Belongs to the bacterial ribosomal protein bS18 family. Mitochondrion-specific ribosomal protein mS40 subfamily. Component of the mitochondrial ribosome small subunit (28S) which comprises a 12S rRNA and about 30 distinct proteins.

It is found in the mitochondrion. This is Small ribosomal subunit protein mS40 (Mrps18b) from Mus musculus (Mouse).